A 182-amino-acid polypeptide reads, in one-letter code: Peptidyl-prolyl cis-trans isomerase H (182 aa).

Residues 15-181 enclose the PPIase cyclophilin-type domain; sequence FFDITLGGEP…LDVVIAQCGE (167 aa).

Belongs to the cyclophilin-type PPIase family. PPIase H subfamily.

It localises to the nucleus. The enzyme catalyses [protein]-peptidylproline (omega=180) = [protein]-peptidylproline (omega=0). PPIases accelerate the folding of proteins. It catalyzes the cis-trans isomerization of proline imidic peptide bonds in oligopeptides. In Neurospora crassa (strain ATCC 24698 / 74-OR23-1A / CBS 708.71 / DSM 1257 / FGSC 987), this protein is Peptidyl-prolyl cis-trans isomerase H (cyp-3).